Reading from the N-terminus, the 130-residue chain is MSKPRIALIAHDAKKDEIVALAGQYRETLAQCRLVATGTTGGRIAAAHGLEVERKLSGPLGGDLQIGAEFADGRVDIVVFLRDPMTAQPHDPDITALVRACDVHDVPVATNVATARMLLDDLARNMQDVC.

Residues 1-130 (MSKPRIALIA…DLARNMQDVC (130 aa)) form the MGS-like domain. Substrate contacts are provided by residues H11, K15, 37-40 (TGTT), and 57-58 (SG). D63 acts as the Proton donor/acceptor in catalysis. H90 serves as a coordination point for substrate.

Belongs to the methylglyoxal synthase family.

The enzyme catalyses dihydroxyacetone phosphate = methylglyoxal + phosphate. In terms of biological role, catalyzes the formation of methylglyoxal from dihydroxyacetone phosphate. This chain is Methylglyoxal synthase, found in Burkholderia orbicola (strain AU 1054).